The following is a 238-amino-acid chain: Probable transcriptional regulatory protein SPH_2064 (238 aa).

The protein belongs to the TACO1 family. YeeN subfamily.

The protein localises to the cytoplasm. The sequence is that of Probable transcriptional regulatory protein SPH_2064 from Streptococcus pneumoniae (strain Hungary19A-6).